An 81-amino-acid chain; its full sequence is Elsinochrome C biosynthesis cluster protein SNOG_08613 (81 aa).

Its function is as follows. Part of the gene cluster that mediates the biosynthesis of elsinochrome C, a perelyenequinone phytotoxin structurally similar to cercosporin. The first step of elsinochrome C biosynthesis is performed by the polyketide synthase elcA which catalyzes the formation of nor-toralactone. The starter unit acyltransferase (SAT) domain of elcA initiates polyketide extension by the selective utilization of acetyl-CoA, which is elongated to the heptaketide in the beta-ketoacyl synthase (KS) domain by successive condensations with six malonyl units introduced by the malonyl acyltransferase (MAT) domain. The product template (PT) domain catalyzes C4-C9 and C2-C11 aldol cyclizations and dehydrations to a trihydroxynaphthalene, which is thought to be delivered to the thioesterase (TE) domain for product release. The bifunctional enzyme elcB then methylates nor-toralactone to toralactone before conducting an unusual oxidative aromatic ring opening. The next step in perylenequinone biosynthesis is an O-methylation at the nascent OH-6 of the elcB product performed by the O-methyltransferase elcD. The oxidative coupling of the two monomeric naphthol units in perylenequinone biosynthesis is catalyzed by the FAD-dependent monooxygenase elcE and the multicopper oxidase elcG. ElcG might catalyze the first intermolecular coupling in a regio- and stereo-selective manner via a phenol radical coupling mechanism and the elcE could forge the second C-C bond intramolecularly via a hydride transfer mechanism. The fasciclin domain-containing protein elcF might also play a role duting this step. The last piece of the puzzle in the biosynthesis of elsinochrome C is the additional annulation by enolate coupling to afford the dihydrobenzo(ghi)perylenequinone system, catalyzed by the FAD-dependent monooxygenase elcH. This Phaeosphaeria nodorum (strain SN15 / ATCC MYA-4574 / FGSC 10173) (Glume blotch fungus) protein is Elsinochrome C biosynthesis cluster protein SNOG_08613.